A 59-amino-acid polypeptide reads, in one-letter code: Protein HOR7 (59 aa).

An N-terminal signal peptide occupies residues 1-19; that stretch reads MKLSQVVVSAVAFTGLVSA.

The protein to yeast DDR2.

The sequence is that of Protein HOR7 (HOR7) from Saccharomyces cerevisiae (strain ATCC 204508 / S288c) (Baker's yeast).